The chain runs to 426 residues: Mediator of RNA polymerase II transcription subunit 4 (426 aa).

The tract at residues 1–56 (MLQHQIVQSPARLGLTGPGSPSVQNPTPTRHGHPTSSSSSQSQHQQIQQQPNLLPS) is disordered. Polar residues predominate over residues 19–28 (GSPSVQNPTP). Residues 36-56 (SSSSSQSQHQQIQQQPNLLPS) are compositionally biased toward low complexity. Residues 160–212 (TELQEILDLQDAKQKVAREIKSKDSSLLAFANKLKDAERVLDMLVDDYSDYRK) adopt a coiled-coil conformation. 2 disordered regions span residues 214-236 (KRSKIEEDDEDNDNESSSSSTTV) and 373-426 (IAAP…DDED). Acidic residues predominate over residues 406–426 (ILEDDDSSDYSSDDASSDDED).

Belongs to the Mediator complex subunit 4 family. In terms of assembly, component of the Mediator complex.

The protein localises to the nucleus. In terms of biological role, component of the Mediator complex, a coactivator involved in the regulated transcription of nearly all RNA polymerase II-dependent genes. Mediator functions as a bridge to convey information from gene-specific regulatory proteins to the basal RNA polymerase II transcription machinery. The Mediator complex, having a compact conformation in its free form, is recruited to promoters by direct interactions with regulatory proteins and serves for the assembly of a functional preinitiation complex with RNA polymerase II and the general transcription factors. This Arabidopsis thaliana (Mouse-ear cress) protein is Mediator of RNA polymerase II transcription subunit 4 (MED4).